A 616-amino-acid chain; its full sequence is Prolactin receptor (616 aa).

A signal peptide spans 1-24 (MKENVASMIVFLLLLFLNIRLLKG). The Extracellular portion of the chain corresponds to 25 to 234 (QSPPGKPFIF…QIPNDFTMKD (210 aa)). 2 Fibronectin type-III domains span residues 27–128 (PPGK…VEPD) and 129–229 (PPVN…IPND). A disulfide bridge links cysteine 36 with cysteine 46. Asparagine 59 carries an N-linked (GlcNAc...) asparagine glycan. Cysteine 75 and cysteine 86 are oxidised to a cystine. N-linked (GlcNAc...) asparagine glycans are attached at residues asparagine 104 and asparagine 132. Zn(2+) contacts are provided by aspartate 211 and histidine 212. The short motif at 215-219 (WSVWS) is the WSXWS motif element. The chain crosses the membrane as a helical span at residues 235–258 (ITVWIFVAVLSTIICLIMVWAVAL). Over 259–616 (KGYSMVTCIF…DPACFMHSLH (358 aa)) the chain is Cytoplasmic. The short motif at 267–275 (IFPPVPGPK) is the Box 1 motif element. 3 disordered regions span residues 326 to 375 (MPAH…STFH), 454 to 492 (QSSKTTEAAGEEKATKQREVESSHSKAEQDTGWLLPKEK), and 568 to 593 (ESTKEAPPSPSQNQAEKDLSSFSTAP). Residues 463-482 (GEEKATKQREVESSHSKAEQ) are compositionally biased toward basic and acidic residues.

It belongs to the type I cytokine receptor family. Type 1 subfamily. As to quaternary structure, interacts with SMARCA1. Interacts with NEK3 and VAV2 and this interaction is prolactin-dependent.

It is found in the membrane. In terms of biological role, this is a receptor for the anterior pituitary hormone prolactin. The sequence is that of Prolactin receptor (PRLR) from Oryctolagus cuniculus (Rabbit).